A 109-amino-acid chain; its full sequence is Flagellar hook-basal body complex protein FliE (109 aa).

Belongs to the FliE family.

Its subcellular location is the bacterial flagellum basal body. This Pseudomonas aeruginosa (strain LESB58) protein is Flagellar hook-basal body complex protein FliE.